Consider the following 428-residue polypeptide: Ribulose bisphosphate carboxylase (428 aa).

Lys151 acts as the Proton acceptor in catalysis. Lys153 serves as a coordination point for substrate. Lys177, Asp179, and Glu180 together coordinate Mg(2+). N6-carboxylysine is present on Lys177. His270 serves as the catalytic Proton acceptor. Residues Arg271, His303, 354 to 356 (SGG), and 376 to 379 (QFGG) contribute to the substrate site.

It belongs to the RuBisCO large chain family. Type III subfamily. Homodimer or homodecamer. In contrast to form I RuBisCO, the form III RuBisCO is composed solely of large subunits. Mg(2+) is required as a cofactor.

The enzyme catalyses 2 (2R)-3-phosphoglycerate + 2 H(+) = D-ribulose 1,5-bisphosphate + CO2 + H2O. It carries out the reaction D-ribulose 1,5-bisphosphate + O2 = 2-phosphoglycolate + (2R)-3-phosphoglycerate + 2 H(+). Functionally, catalyzes the addition of molecular CO(2) and H(2)O to ribulose 1,5-bisphosphate (RuBP), generating two molecules of 3-phosphoglycerate (3-PGA). Functions in an archaeal AMP degradation pathway, together with AMP phosphorylase and R15P isomerase. This Methanosarcina mazei (strain ATCC BAA-159 / DSM 3647 / Goe1 / Go1 / JCM 11833 / OCM 88) (Methanosarcina frisia) protein is Ribulose bisphosphate carboxylase.